Here is a 590-residue protein sequence, read N- to C-terminus: Arginine--tRNA ligase (590 aa).

The short motif at P130–H140 is the 'HIGH' region element.

This sequence belongs to the class-I aminoacyl-tRNA synthetase family. Monomer.

It is found in the cytoplasm. It catalyses the reaction tRNA(Arg) + L-arginine + ATP = L-arginyl-tRNA(Arg) + AMP + diphosphate. In Synechococcus sp. (strain CC9605), this protein is Arginine--tRNA ligase.